The chain runs to 100 residues: Large ribosomal subunit protein uL23 (100 aa).

Belongs to the universal ribosomal protein uL23 family. Part of the 50S ribosomal subunit. Contacts protein L29, and trigger factor when it is bound to the ribosome.

In terms of biological role, one of the early assembly proteins it binds 23S rRNA. One of the proteins that surrounds the polypeptide exit tunnel on the outside of the ribosome. Forms the main docking site for trigger factor binding to the ribosome. The polypeptide is Large ribosomal subunit protein uL23 (Proteus mirabilis (strain HI4320)).